The sequence spans 461 residues: Glycine--tRNA ligase (461 aa).

The substrate site is built by arginine 100 and glutamate 163. ATP-binding positions include 195–197 (RNE), 205–210 (FRTREF), 282–283 (EL), and 326–329 (GLGR). 210 to 214 (FEQME) contributes to the substrate binding site. 322–326 (EPAAG) contributes to the substrate binding site.

This sequence belongs to the class-II aminoacyl-tRNA synthetase family. In terms of assembly, homodimer.

The protein resides in the cytoplasm. It carries out the reaction tRNA(Gly) + glycine + ATP = glycyl-tRNA(Gly) + AMP + diphosphate. In terms of biological role, catalyzes the attachment of glycine to tRNA(Gly). The chain is Glycine--tRNA ligase from Corynebacterium glutamicum (strain ATCC 13032 / DSM 20300 / JCM 1318 / BCRC 11384 / CCUG 27702 / LMG 3730 / NBRC 12168 / NCIMB 10025 / NRRL B-2784 / 534).